Reading from the N-terminus, the 160-residue chain is SsrA-binding protein (160 aa).

Belongs to the SmpB family.

Its subcellular location is the cytoplasm. Required for rescue of stalled ribosomes mediated by trans-translation. Binds to transfer-messenger RNA (tmRNA), required for stable association of tmRNA with ribosomes. tmRNA and SmpB together mimic tRNA shape, replacing the anticodon stem-loop with SmpB. tmRNA is encoded by the ssrA gene; the 2 termini fold to resemble tRNA(Ala) and it encodes a 'tag peptide', a short internal open reading frame. During trans-translation Ala-aminoacylated tmRNA acts like a tRNA, entering the A-site of stalled ribosomes, displacing the stalled mRNA. The ribosome then switches to translate the ORF on the tmRNA; the nascent peptide is terminated with the 'tag peptide' encoded by the tmRNA and targeted for degradation. The ribosome is freed to recommence translation, which seems to be the essential function of trans-translation. This is SsrA-binding protein from Marinobacter nauticus (strain ATCC 700491 / DSM 11845 / VT8) (Marinobacter aquaeolei).